The primary structure comprises 718 residues: LON peptidase N-terminal domain and RING finger protein 3 (718 aa).

The interval 1 to 69 is disordered; the sequence is MESLRTEQML…PGTSTPESKV (69 aa). Residues 57-66 are compositionally biased toward polar residues; the sequence is EQSPGTSTPE. One copy of the TPR 1 repeat lies at 67 to 100; that stretch reads SKVLLTQADALASRGRIREALEVYRQLSERQQLV. The segment at 158 to 196 adopts an RING-type 1 zinc-finger fold; that stretch reads CRKCHGFLSDPVSLSCGHTFCKLCLERGRAADRRCALCG. 2 TPR repeats span residues 243–276 and 278–310; these read ASQL…APND and LLYS…RPMG. The segment at 322 to 413 is disordered; the sequence is SQEEAAARGD…TDQGDKPALS (92 aa). Basic and acidic residues predominate over residues 339–352; that stretch reads AKVKGDGQQHHMKD. The RING-type 2 zinc finger occupies 426–464; sequence CALCMRLFYEPVTTPCGHTFCLKCLERCLDHNAKCPLCK. In terms of domain architecture, Lon N-terminal spans 505 to 714; that stretch reads MEELSNLNKN…GIRRVLAFIS (210 aa).

This is LON peptidase N-terminal domain and RING finger protein 3 (LONRF3) from Macaca fascicularis (Crab-eating macaque).